Here is a 330-residue protein sequence, read N- to C-terminus: Phosphate acyltransferase (330 aa).

The protein belongs to the PlsX family. In terms of assembly, homodimer. Probably interacts with PlsY.

The protein resides in the cytoplasm. It catalyses the reaction a fatty acyl-[ACP] + phosphate = an acyl phosphate + holo-[ACP]. It participates in lipid metabolism; phospholipid metabolism. In terms of biological role, catalyzes the reversible formation of acyl-phosphate (acyl-PO(4)) from acyl-[acyl-carrier-protein] (acyl-ACP). This enzyme utilizes acyl-ACP as fatty acyl donor, but not acyl-CoA. The sequence is that of Phosphate acyltransferase from Teredinibacter turnerae (strain ATCC 39867 / T7901).